The following is a 127-amino-acid chain: uncharacterized protein (127 aa).

The VOC domain occupies 1–127 (MKIVVTSIFV…CGNLIQIVQK (127 aa)).

This sequence belongs to the glyoxalase I family.

This is an uncharacterized protein from Bacillus subtilis (strain 168).